The sequence spans 558 residues: Putative polypeptide N-acetylgalactosaminyltransferase 13 (558 aa).

Residues 1 to 12 are Cytoplasmic-facing; the sequence is MHAGGKYCGPRH. The helical; Signal-anchor for type II membrane protein transmembrane segment at 13–32 threads the bilayer; that stretch reads CSFYIIAFLICQLFFLVIFI. At 33 to 558 the chain is on the lumenal side; sequence RNDDASSANE…QFALEMEGQT (526 aa). N-linked (GlcNAc...) asparagine glycans are attached at residues asparagine 48 and asparagine 111. 4 cysteine pairs are disulfide-bonded: cysteine 97/cysteine 335, cysteine 326/cysteine 412, cysteine 445/cysteine 460, and cysteine 484/cysteine 498. Positions 109–225 are catalytic subdomain A; that stretch reads EANVSVVISF…EGWLEPLLER (117 aa). Substrate is bound by residues aspartate 150 and arginine 186. Mn(2+) is bound at residue aspartate 209. A substrate-binding site is contributed by serine 210. Histidine 211 is a binding site for Mn(2+). Positions 281–343 are catalytic subdomain B; sequence PYQSPAFAGG…PCSRIGHIFR (63 aa). Residue tryptophan 312 coordinates substrate. Histidine 340 contacts Mn(2+). Residues arginine 343 and histidine 346 each contribute to the substrate site. In terms of domain architecture, Ricin B-type lectin spans 422-556; sequence VSPELRMHFD…SFQFALEMEG (135 aa). Asparagine 501 is a glycosylation site (N-linked (GlcNAc...) asparagine). Cysteine 525 and cysteine 539 are joined by a disulfide.

This sequence belongs to the glycosyltransferase 2 family. GalNAc-T subfamily. Mn(2+) serves as cofactor. As to expression, during embryonic stages 16-17, very weak expression in the midgut.

Its subcellular location is the golgi apparatus membrane. The catalysed reaction is L-seryl-[protein] + UDP-N-acetyl-alpha-D-galactosamine = a 3-O-[N-acetyl-alpha-D-galactosaminyl]-L-seryl-[protein] + UDP + H(+). The enzyme catalyses L-threonyl-[protein] + UDP-N-acetyl-alpha-D-galactosamine = a 3-O-[N-acetyl-alpha-D-galactosaminyl]-L-threonyl-[protein] + UDP + H(+). It functions in the pathway protein modification; protein glycosylation. In terms of biological role, may catalyze the initial reaction in O-linked oligosaccharide biosynthesis, the transfer of an N-acetyl-D-galactosamine residue to a serine or threonine residue on the protein receptor. The sequence is that of Putative polypeptide N-acetylgalactosaminyltransferase 13 (pgant13) from Drosophila melanogaster (Fruit fly).